The sequence spans 172 residues: Adenine phosphoribosyltransferase (172 aa).

Belongs to the purine/pyrimidine phosphoribosyltransferase family. In terms of assembly, homodimer.

Its subcellular location is the cytoplasm. It catalyses the reaction AMP + diphosphate = 5-phospho-alpha-D-ribose 1-diphosphate + adenine. It functions in the pathway purine metabolism; AMP biosynthesis via salvage pathway; AMP from adenine: step 1/1. Functionally, catalyzes a salvage reaction resulting in the formation of AMP, that is energically less costly than de novo synthesis. The polypeptide is Adenine phosphoribosyltransferase (Clostridium tetani (strain Massachusetts / E88)).